The sequence spans 154 residues: Glycosylation-dependent cell adhesion molecule 1 (154 aa).

An N-terminal signal peptide occupies residues 1–18 (MKFLCILLLASLAATSLA). Residue threonine 34 is glycosylated (O-linked (GalNAc...) threonine; partial). Phosphoserine occurs at positions 48, 53, 57, 59, and 65. A compositionally biased stretch (basic and acidic residues) spans 51-65 (DLSKEPSISREDLIS). Residues 51-115 (DLSKEPSISR…EHAPSDASTT (65 aa)) are disordered. Asparagine 96 carries an N-linked (GlcNAc...) asparagine glycan.

The protein belongs to the PP3/GlyCAM-1 family. In terms of tissue distribution, highly and specifically expressed in the lactating mammary gland.

It localises to the membrane. The chain is Glycosylation-dependent cell adhesion molecule 1 (GLYCAM1) from Capra hircus (Goat).